A 240-amino-acid polypeptide reads, in one-letter code: Small ribosomal subunit protein uS2 (240 aa).

Belongs to the universal ribosomal protein uS2 family.

This Wigglesworthia glossinidia brevipalpis protein is Small ribosomal subunit protein uS2.